A 68-amino-acid polypeptide reads, in one-letter code: Large ribosomal subunit protein uL29 (68 aa).

It belongs to the universal ribosomal protein uL29 family.

The sequence is that of Large ribosomal subunit protein uL29 from Chloroflexus aggregans (strain MD-66 / DSM 9485).